The sequence spans 103 residues: Small ribosomal subunit protein uS10 (103 aa).

The protein belongs to the universal ribosomal protein uS10 family. As to quaternary structure, part of the 30S ribosomal subunit.

Functionally, involved in the binding of tRNA to the ribosomes. This Neisseria gonorrhoeae (strain NCCP11945) protein is Small ribosomal subunit protein uS10.